Reading from the N-terminus, the 268-residue chain is Transcription initiation factor TFIID subunit 14b (268 aa).

A compositionally biased stretch (polar residues) spans 1-20; it reads MTNSSSSKKQAQDQPETSEP. Positions 1–36 are disordered; the sequence is MTNSSSSKKQAQDQPETSEPTLKSLKTKMTKSDEKQ. In terms of domain architecture, YEATS spans 38–182; that stretch reads KLKDIEISVP…ESFLARVQNH (145 aa). Residues 229–263 adopt a coiled-coil conformation; the sequence is DELLQLAAARQQVQAHIAKLRRQISLLEGQNQTVK.

This sequence belongs to the YAF9 family. As to quaternary structure, component of the TFIID complex. TFIID is composed of TATA binding protein (TBP) and a number of TBP-associated factors (TAFs) whose MWs range from 14-217 kDa. Interacts with TAF1, TAF4B and TAF12B. Component of the SWR1 chromatin-remodeling complex. Interacts with FLX, a component of the transcription activator complex FRI-C. Interacts with SWC4, and with EAF1A and EAF1B (via HSA domain). In terms of tissue distribution, expressed in roots, leaves, inflorescence and flowering tissues.

The protein localises to the cytoplasm. Its subcellular location is the nucleus. Negative regulator of flowering controlling the H4K5 acetylation levels in the FLC and FT chromatin. Positively regulates FLC expression. Component of the transcription factor IID (TFIID) complex that is essential for mediating regulation of RNA polymerase transcription. Component of the SWR1 complex which mediates the ATP-dependent exchange of histone H2A for the H2A variant HZT1 leading to transcriptional regulation of selected genes by chromatin remodeling. Component of a NuA4 histone acetyltransferase complex which is involved in transcriptional activation of selected genes principally by acetylation of nucleosomal histones H4 and H2A. In Arabidopsis thaliana (Mouse-ear cress), this protein is Transcription initiation factor TFIID subunit 14b.